Consider the following 299-residue polypeptide: UDP-N-acetylenolpyruvoylglucosamine reductase (299 aa).

In terms of domain architecture, FAD-binding PCMH-type spans 31 to 192 (VGGVAEVVFK…VDATFVGACG (162 aa)). R172 is a catalytic residue. The active-site Proton donor is the S221. Residue E291 is part of the active site.

This sequence belongs to the MurB family. It depends on FAD as a cofactor.

It is found in the cytoplasm. It catalyses the reaction UDP-N-acetyl-alpha-D-muramate + NADP(+) = UDP-N-acetyl-3-O-(1-carboxyvinyl)-alpha-D-glucosamine + NADPH + H(+). It participates in cell wall biogenesis; peptidoglycan biosynthesis. Functionally, cell wall formation. This Anaplasma marginale (strain St. Maries) protein is UDP-N-acetylenolpyruvoylglucosamine reductase.